Reading from the N-terminus, the 47-residue chain is PhoP/PhoQ regulator MgrB (47 aa).

A helical membrane pass occupies residues 6–26 (WVILIIVLIACVILWTQTINV).

This sequence belongs to the MgrB family. May form homooligomers. Probably interacts with the periplasmic domain of PhoQ.

It is found in the cell inner membrane. PhoP-regulated transcription is redox-sensitive, being activated when the periplasm becomes more reducing. MgrB acts between DsbA/DsbB and PhoP/PhoQ in this pathway. Represses PhoP/PhoQ signaling, possibly by binding to the periplasmic domain of PhoQ, altering its activity and that of downstream effector PhoP. The sequence is that of PhoP/PhoQ regulator MgrB from Enterobacter sp. (strain 638).